We begin with the raw amino-acid sequence, 225 residues long: Probable iron export ATP-binding protein FetA (225 aa).

The 218-residue stretch at 8-225 (LQLQNVGYLA…EMQEARYELA (218 aa)) folds into the ABC transporter domain. 40–47 (GPSGCGKS) lines the ATP pocket.

This sequence belongs to the ABC transporter superfamily. As to quaternary structure, the complex is composed of two ATP-binding proteins (FetA) and two transmembrane proteins (FetB).

It localises to the cell inner membrane. Part of the ABC transporter complex FetAB, which is probably involved in iron export and enhances resistance to H(2)O(2)-mediated oxidative stress. Probably responsible for energy coupling to the transport system. The chain is Probable iron export ATP-binding protein FetA (fetA) from Escherichia coli (strain K12).